A 227-amino-acid polypeptide reads, in one-letter code: Probable septum site-determining protein MinC (227 aa).

This sequence belongs to the MinC family. Interacts with MinD and FtsZ.

Its function is as follows. Cell division inhibitor that blocks the formation of polar Z ring septums. Rapidly oscillates between the poles of the cell to destabilize FtsZ filaments that have formed before they mature into polar Z rings. Prevents FtsZ polymerization. In Geobacillus thermodenitrificans (strain NG80-2), this protein is Probable septum site-determining protein MinC.